A 306-amino-acid chain; its full sequence is Small ribosomal subunit protein uS2 (306 aa).

The segment covering 229-238 has biased composition (basic and acidic residues); that stretch reads GEESAAEERP. Residues 229–306 are disordered; that stretch reads GEESAAEERP…VGEGDESEER (78 aa). Residues 261-287 show a composition bias toward acidic residues; that stretch reads QPGEPEAEAFEEAAGEPEDSTEEEAAE.

This sequence belongs to the universal ribosomal protein uS2 family.

The chain is Small ribosomal subunit protein uS2 from Rubrobacter xylanophilus (strain DSM 9941 / JCM 11954 / NBRC 16129 / PRD-1).